We begin with the raw amino-acid sequence, 372 residues long: Inner membrane protein YbiR (372 aa).

The Periplasmic portion of the chain corresponds to 1 to 13 (MSLPFLRTLQGDR). 2 helical membrane passes run 14–34 (FFQL…FAPK) and 35–55 (SWPA…MLLT). Residues 56–85 (KGVELSGYFDVLGRKMVRRFATERRLAMFM) are Periplasmic-facing. Residues 86 to 106 (VLAAALLSTFLTNDVALFIVV) form a helical membrane-spanning segment. Topologically, residues 107–122 (PLTITLKRLCEIPVNR) are cytoplasmic. Residues 123–143 (LIIFEALAVNAGSLLTPIGNP) form a helical membrane-spanning segment. Residues 144–155 (QNILIWGRSGLS) lie on the Periplasmic side of the membrane. The chain crosses the membrane as a helical span at residues 156 to 176 (FAGFIAQMAPLAGAMMLTLLL). The Cytoplasmic segment spans residues 177-208 (LCWCCFPGKAMQYHTGVQTPEWKPRLVWSCLG). The helical transmembrane segment at 209–229 (LYIVFLTALEFKQELWGLVIV) threads the bilayer. Residues 230 to 247 (AAGFALLARRVVLSVDWT) are Periplasmic-facing. The helical transmembrane segment at 248-268 (LLLVFMAMFIDVHLLTQLPAL) threads the bilayer. Topologically, residues 269–283 (QGVLGNVSHLSEPGL) are cytoplasmic. Residues 284-304 (WLTAIGLSQVISNVPSTILLL) traverse the membrane as a helical segment. The Periplasmic portion of the chain corresponds to 305 to 309 (NYVPP). A helical membrane pass occupies residues 310-330 (SLLLVWAVNVGGFGLLPGSLA). Residues 331 to 348 (NLIALRMANDRRIWWRFH) are Cytoplasmic-facing. A helical membrane pass occupies residues 349–369 (LYSIPMLLWAALVGYVLLVIL). Residues 370 to 372 (PAN) are Periplasmic-facing.

The protein belongs to the CitM (TC 2.A.11) transporter family.

The protein localises to the cell inner membrane. This Escherichia coli (strain K12) protein is Inner membrane protein YbiR (ybiR).